Reading from the N-terminus, the 37-residue chain is Bactericidin B-3 (37 aa).

Gly37 is subject to Glycine amide.

This sequence belongs to the cecropin family.

It localises to the secreted. Cecropins have lytic and antibacterial activity against several Gram-positive and Gram-negative bacteria. This is Bactericidin B-3 from Manduca sexta (Tobacco hawkmoth).